Reading from the N-terminus, the 438-residue chain is Trigger factor (438 aa).

A PPIase FKBP-type domain is found at 162–247 (GDIVTIDFEG…VKDIKVKELP (86 aa)).

It belongs to the FKBP-type PPIase family. Tig subfamily.

It localises to the cytoplasm. The enzyme catalyses [protein]-peptidylproline (omega=180) = [protein]-peptidylproline (omega=0). In terms of biological role, involved in protein export. Acts as a chaperone by maintaining the newly synthesized protein in an open conformation. Functions as a peptidyl-prolyl cis-trans isomerase. This Caldicellulosiruptor bescii (strain ATCC BAA-1888 / DSM 6725 / KCTC 15123 / Z-1320) (Anaerocellum thermophilum) protein is Trigger factor.